Consider the following 698-residue polypeptide: Elongation factor G (698 aa).

A tr-type G domain is found at 8 to 290 (ERYRNIGISA…AVIELLPSPV (283 aa)). Residues 17-24 (AHIDAGKT), 88-92 (DTPGH), and 142-145 (NKMD) contribute to the GTP site.

This sequence belongs to the TRAFAC class translation factor GTPase superfamily. Classic translation factor GTPase family. EF-G/EF-2 subfamily.

It is found in the cytoplasm. Its function is as follows. Catalyzes the GTP-dependent ribosomal translocation step during translation elongation. During this step, the ribosome changes from the pre-translocational (PRE) to the post-translocational (POST) state as the newly formed A-site-bound peptidyl-tRNA and P-site-bound deacylated tRNA move to the P and E sites, respectively. Catalyzes the coordinated movement of the two tRNA molecules, the mRNA and conformational changes in the ribosome. The protein is Elongation factor G of Aromatoleum aromaticum (strain DSM 19018 / LMG 30748 / EbN1) (Azoarcus sp. (strain EbN1)).